Reading from the N-terminus, the 132-residue chain is MEKQSYYGLGRRKSSSAKVYLTPTQDKGKITVNRRDPSEYFPNKLVIQDMEQPLDLTDLKKNFDINVVVKGGGFTGQAGAIRLGIVRALLQFNPELKKILKSKKLTTRDKRVKERKKFGLYGARRAPQFTKR.

This sequence belongs to the universal ribosomal protein uS9 family.

In Mycoplasma pneumoniae (strain ATCC 29342 / M129 / Subtype 1) (Mycoplasmoides pneumoniae), this protein is Small ribosomal subunit protein uS9 (rpsI).